Here is a 327-residue protein sequence, read N- to C-terminus: MSSLVTLNNGLKMPLVGLGCWKIDKKVCANQIYEAIKLGYRLFDGACDYGNEKEVGEGIRKAISEGLVSRKDIFVVSKLWNNFHHPDHVKLALKKTLSDMGLDYLDLYYIHFPIAFKYVPFEEKYPPGFYTGADDEKKGHITEAHVPIIDTYRALEECVDEGLIKSIGVSNFQGSLIQDLLRGCRIKPVALQIEHHPYLTQEHLVEFCKLHDIQVVAYSSFGPQSFIEMDLQLAKTTPTLFENDVIKKVSQNHPGSTTSQVLLRWATQRGIAVIPKSSKKERLLGNLEIEKKFTLTEQELKDISALNANIRFNDPWTWLDGKFPTFA.

Tyrosine 49 (proton donor) is an active-site residue. Histidine 111 contributes to the substrate binding site. Position 219–286 (219–286 (SSFGPQSFIE…SSKKERLLGN (68 aa))) interacts with NADP(+).

This sequence belongs to the aldo/keto reductase family. In terms of assembly, monomer.

The protein resides in the cytoplasm. Its subcellular location is the nucleus. The enzyme catalyses an alditol + NAD(+) = an aldose + NADH + H(+). It carries out the reaction an alditol + NADP(+) = an aldose + NADPH + H(+). Functionally, aldose reductase with a broad substrate specificity. Reduces the cytotoxic compound methylglyoxal (MG) to acetol and (R)-lactaldehyde under stress conditions. MG is synthesized via a bypath of glycolysis from dihydroxyacetone phosphate and is believed to play a role in cell cycle regulation and stress adaptation. In pentose-fermenting yeasts, aldose reductase catalyzes the reduction of xylose into xylitol. The purified enzyme catalyzes this reaction, but the inability of S.cerevisiae to grow on xylose as sole carbon source indicates that the physiological function is more likely methylglyoxal reduction. This Saccharomyces cerevisiae (strain ATCC 204508 / S288c) (Baker's yeast) protein is NADPH-dependent aldose reductase GRE3.